We begin with the raw amino-acid sequence, 289 residues long: ATP synthase gamma chain (289 aa).

It belongs to the ATPase gamma chain family. As to quaternary structure, F-type ATPases have 2 components, CF(1) - the catalytic core - and CF(0) - the membrane proton channel. CF(1) has five subunits: alpha(3), beta(3), gamma(1), delta(1), epsilon(1). CF(0) has three main subunits: a, b and c.

Its subcellular location is the cell inner membrane. Produces ATP from ADP in the presence of a proton gradient across the membrane. The gamma chain is believed to be important in regulating ATPase activity and the flow of protons through the CF(0) complex. The sequence is that of ATP synthase gamma chain from Pasteurella multocida (strain Pm70).